We begin with the raw amino-acid sequence, 671 residues long: DNA ligase (671 aa).

Residues Asp32–Asp36, Ser81–Leu82, and Glu113 contribute to the NAD(+) site. The N6-AMP-lysine intermediate role is filled by Lys115. Positions 136, 173, 290, and 314 each coordinate NAD(+). The Zn(2+) site is built by Cys408, Cys411, Cys426, and Cys432. Positions Glu593 to Ser671 constitute a BRCT domain.

The protein belongs to the NAD-dependent DNA ligase family. LigA subfamily. Mg(2+) serves as cofactor. The cofactor is Mn(2+).

It carries out the reaction NAD(+) + (deoxyribonucleotide)n-3'-hydroxyl + 5'-phospho-(deoxyribonucleotide)m = (deoxyribonucleotide)n+m + AMP + beta-nicotinamide D-nucleotide.. Its function is as follows. DNA ligase that catalyzes the formation of phosphodiester linkages between 5'-phosphoryl and 3'-hydroxyl groups in double-stranded DNA using NAD as a coenzyme and as the energy source for the reaction. It is essential for DNA replication and repair of damaged DNA. This is DNA ligase from Escherichia coli O9:H4 (strain HS).